A 552-amino-acid polypeptide reads, in one-letter code: Putative transport protein HSM_0534 (552 aa).

A run of 5 helical transmembrane segments spans residues 4-24 (IAIT…IGHW), 28-48 (GVGL…HFMN), 67-87 (LILF…ASLL), 95-115 (GLAT…YKVV), and 157-177 (MAYA…MWLI). RCK C-terminal domains are found at residues 190–275 (KQFQ…VIGE) and 277–360 (IDMP…IIGN). The next 6 membrane-spanning stretches (helical) occupy residues 370–390 (MLPV…PFYI), 402–424 (AGGP…LYWF), 438–458 (IVLF…DTLV), 463–483 (LEWM…TGII), 495–515 (LCGL…ANAI), and 529–549 (VYPL…ILLW).

This sequence belongs to the AAE transporter (TC 2.A.81) family. YidE subfamily.

The protein localises to the cell membrane. The sequence is that of Putative transport protein HSM_0534 from Histophilus somni (strain 2336) (Haemophilus somnus).